We begin with the raw amino-acid sequence, 292 residues long: Elongation factor Ts (292 aa).

Residues 82-85 are involved in Mg(2+) ion dislocation from EF-Tu; the sequence is TDFV.

It belongs to the EF-Ts family.

The protein resides in the cytoplasm. Its function is as follows. Associates with the EF-Tu.GDP complex and induces the exchange of GDP to GTP. It remains bound to the aminoacyl-tRNA.EF-Tu.GTP complex up to the GTP hydrolysis stage on the ribosome. The chain is Elongation factor Ts from Bordetella petrii (strain ATCC BAA-461 / DSM 12804 / CCUG 43448).